The sequence spans 394 residues: MIIQPRVRGFVCVTSHPVGCAAHVQEWIDYVKSKGVIAHGPKKVLVIGASTGYGLASRVTAAFGSGAATIGVFYERPSEEGRLATPGWYNSIGFTRAARAAGLYARNFNGDAFSDDIKKQVLDAIKADLGQVDLVIYSLASPRRTHPRTGTVHKSVLKPVGAPYTNKTVDTDTGIVSEITIEPATETEIADTIAVMGGEDWELWMHALRDANLLAPNAQTVAYSYIGPEVTWPVYKNGTIGLAKNDLERAAQALDALLKPTGGRAFIAVNKALVTQASSAIPVVPLYISILYKIMKARGTHERCIEQMQRLFATHMYNGQTPRFDETGRVRIDDLEMAPEVQAAVREIWPTVTTANLVERTDIAGYRSEFLRLFGFGMPGVDYQADVDPHIPMI.

Residues 48–53 (GASTGY), 74–75 (YE), 111–112 (DA), and 139–140 (LA) contribute to the NAD(+) site. Tyrosine 225 provides a ligand contact to substrate. Tyrosine 235 functions as the Proton donor in the catalytic mechanism. NAD(+)-binding positions include lysine 244 and 273 to 275 (LVT).

This sequence belongs to the TER reductase family. Monomer.

It catalyses the reaction a 2,3-saturated acyl-[ACP] + NAD(+) = a (2E)-enoyl-[ACP] + NADH + H(+). It functions in the pathway lipid metabolism; fatty acid biosynthesis. Its function is as follows. Involved in the final reduction of the elongation cycle of fatty acid synthesis (FAS II). Catalyzes the reduction of a carbon-carbon double bond in an enoyl moiety that is covalently linked to an acyl carrier protein (ACP). This chain is Enoyl-[acyl-carrier-protein] reductase [NADH], found in Opitutus terrae (strain DSM 11246 / JCM 15787 / PB90-1).